The following is a 251-amino-acid chain: 3-deoxy-manno-octulosonate cytidylyltransferase (251 aa).

Belongs to the KdsB family.

It localises to the cytoplasm. It catalyses the reaction 3-deoxy-alpha-D-manno-oct-2-ulosonate + CTP = CMP-3-deoxy-beta-D-manno-octulosonate + diphosphate. It participates in nucleotide-sugar biosynthesis; CMP-3-deoxy-D-manno-octulosonate biosynthesis; CMP-3-deoxy-D-manno-octulosonate from 3-deoxy-D-manno-octulosonate and CTP: step 1/1. Its pathway is bacterial outer membrane biogenesis; lipopolysaccharide biosynthesis. Its function is as follows. Activates KDO (a required 8-carbon sugar) for incorporation into bacterial lipopolysaccharide in Gram-negative bacteria. This is 3-deoxy-manno-octulosonate cytidylyltransferase from Geotalea uraniireducens (strain Rf4) (Geobacter uraniireducens).